The sequence spans 468 residues: Probable Xaa-Pro aminopeptidase pepP (468 aa).

4 residues coordinate Mn(2+): Asp-265, Asp-276, Glu-399, and Glu-439.

It belongs to the peptidase M24B family. Mn(2+) serves as cofactor.

It carries out the reaction Release of any N-terminal amino acid, including proline, that is linked to proline, even from a dipeptide or tripeptide.. Functionally, catalyzes the removal of a penultimate prolyl residue from the N-termini of peptides. The sequence is that of Probable Xaa-Pro aminopeptidase pepP (pepP) from Aspergillus fumigatus (strain CBS 144.89 / FGSC A1163 / CEA10) (Neosartorya fumigata).